A 572-amino-acid polypeptide reads, in one-letter code: MDDDYEAYHSLFLSLLGLCPSKTPINENAPVFDPEPVIAHCFKQFQQKDFRLPQTRRRIIMVPRKEDQTPLNPASQPQAPPKPIPSFKVLEARDIQEQPEDRKTWLSQRSKLRQELESFGDVKRWLENKPSITPSEAKVLHMIHEEQSAQPNASQATTRTTRKKAPRLSRLSRQMVPQLQLPEPPALSVMYSYLHSRKIKILEIFHKVGQGENQRITREEFIAAVKAVGVPLKNQEVEDIVIYLSSLGKHNTITMDILANTYKQWSMAQQRSSLATAREHYILAKHRDSLKGPLKKQEVDSAPQLPKVDLLTVPAVDTQMETRPMTLEEMEEVGKRYRERQRQHKLTIPSIQYTEQCHLVRCGNRHFDEHCLPSTIHGDMRELIDSARRHNFLVYLQCWKLCKSYGLPLTEDILMKALLYPGDKIIFQMDKVCPIRQPGGYYSDWKVFSPNLALLRSQGPGKSKRTDKKTPKKSKKMRFKEFEEFTRKLKVKRSSGLQQTHPNSFWPGHLLDKLQLYLPTVATDRSLALFSCVQHQPHVYPATYHPDHWWPLRNKNYMTHAHYDAAKVYYIN.

2 disordered regions span residues 62 to 85 (VPRK…KPIP) and 146 to 169 (EQSA…PRLS). The EF-hand domain maps to 196-231 (SRKIKILEIFHKVGQGENQRITREEFIAAVKAVGVP). E212 lines the Ca(2+) pocket.

This chain is EF-hand calcium-binding domain-containing protein 12 (EFCAB12), found in Homo sapiens (Human).